Here is a 172-residue protein sequence, read N- to C-terminus: uncharacterized protein (172 aa).

The protein belongs to the flavoredoxin family. FMN serves as cofactor.

This is an uncharacterized protein from Pyrococcus abyssi (strain GE5 / Orsay).